Here is a 305-residue protein sequence, read N- to C-terminus: Translation initiation factor eIF2B subunit alpha (305 aa).

Residue serine 2 is modified to N-acetylserine. Phosphothreonine is present on threonine 291.

It belongs to the eIF-2B alpha/beta/delta subunits family. Component of the translation initiation factor 2B (eIF2B) complex which is a heterodecamer of two sets of five different subunits: alpha, beta, gamma, delta and epsilon. Subunits alpha, beta and delta comprise a regulatory subcomplex and subunits epsilon and gamma comprise a catalytic subcomplex. Within the complex, the hexameric regulatory complex resides at the center, with the two heterodimeric catalytic subcomplexes bound on opposite sides.

The protein resides in the cytoplasm. It localises to the cytosol. Functionally, acts as a component of the translation initiation factor 2B (eIF2B) complex, which catalyzes the exchange of GDP for GTP on the eukaryotic initiation factor 2 (eIF2) complex gamma subunit. Its guanine nucleotide exchange factor activity is repressed when bound to eIF2 complex phosphorylated on the alpha subunit, thereby limiting the amount of methionyl-initiator methionine tRNA available to the ribosome and consequently global translation is repressed. It activates the translation of GCN4 in response to low amino acid, carbon, or purine availability, by suppressing the inhibitory effects of multiple uORFs present in the leader of GCN4 mRNA. It may promote either repression or activation of GCN4 expression depending on amino acid availability. Modulation of GCN3 regulatory function in response to amino acid availability occurs post-translationally. The polypeptide is Translation initiation factor eIF2B subunit alpha (Saccharomyces cerevisiae (strain ATCC 204508 / S288c) (Baker's yeast)).